A 324-amino-acid polypeptide reads, in one-letter code: Protease HtpX homolog (324 aa).

The next 2 membrane-spanning stretches (helical) occupy residues 7–24 (ALLL…GYLI) and 29–46 (GALI…FTYW). Residue H130 participates in Zn(2+) binding. Residue E131 is part of the active site. Residue H134 coordinates Zn(2+). 2 helical membrane passes run 145-165 (ITAT…FFGG) and 172-192 (GPGL…AMLV). E201 lines the Zn(2+) pocket. Polar residues predominate over residues 288-305 (PASTFSRGAGTAASSGTP). Positions 288-324 (PASTFSRGAGTAASSGTPRGTGRSPWGGQPRGRGPWG) are disordered.

This sequence belongs to the peptidase M48B family. The cofactor is Zn(2+).

It is found in the cell inner membrane. This is Protease HtpX homolog from Rhodopseudomonas palustris (strain TIE-1).